The following is a 507-amino-acid chain: Maturase K (507 aa).

This sequence belongs to the intron maturase 2 family. MatK subfamily.

Its subcellular location is the plastid. The protein localises to the chloroplast. Usually encoded in the trnK tRNA gene intron. Probably assists in splicing its own and other chloroplast group II introns. The sequence is that of Maturase K from Cupaniopsis anacardioides (Carrotwood).